Consider the following 602-residue polypeptide: uncharacterized protein (602 aa).

In terms of domain architecture, Helicase ATP-binding spans 51–210; the sequence is QYLGTQPRDF…PFVSYQPDAD (160 aa). Residues 430–439 show a composition bias toward basic and acidic residues; sequence PHRESAHDPL. Disordered regions lie at residues 430–452 and 518–538; these read PHRE…TERG and RAQL…ASVH. Over residues 523–534 the composition is skewed to polar residues; that stretch reads KGATQPATSGAS.

This sequence to M.leprae ML1624.

This is an uncharacterized protein from Mycobacterium tuberculosis (strain CDC 1551 / Oshkosh).